The sequence spans 348 residues: Hereditary hemochromatosis protein homolog (348 aa).

The first 22 residues, 1 to 22, serve as a signal peptide directing secretion; the sequence is MGPRARPALFFLILLRTVAAQG. An alpha-1 region spans residues 23-114; the sequence is RPPRSHSLRY…IMDNHNHSKE (92 aa). The Extracellular portion of the chain corresponds to 23-306; the sequence is RPPRSHSLRY…WEPSLSNTLV (284 aa). N-linked (GlcNAc...) asparagine glycosylation is found at Asn-110, Asn-130, and Asn-234. Residues 115–205 are alpha-2; the sequence is SHTLQVILGC…ELGRGVLDQQ (91 aa). Cystine bridges form between Cys-124/Cys-187 and Cys-225/Cys-282. The alpha-3 stretch occupies residues 206 to 297; it reads VPPLVKVTHH…GLDQPLTATW (92 aa). The region spanning 207–296 is the Ig-like C1-type domain; that stretch reads PPLVKVTHHV…PGLDQPLTAT (90 aa). The interval 298–306 is connecting peptide; the sequence is EPSLSNTLV. A helical transmembrane segment spans residues 307–330; the sequence is TGVISGIAVCVIIFFIGILFRILR. The Cytoplasmic portion of the chain corresponds to 331–348; sequence KRQASRGAMGDYVLGECE.

It belongs to the MHC class I family. In terms of assembly, binds TFR through the extracellular domain in a pH-dependent manner.

The protein localises to the cell membrane. Functionally, binds to transferrin receptor (TFR) and reduces its affinity for iron-loaded transferrin. The protein is Hereditary hemochromatosis protein homolog (HFE) of Ceratotherium simum (White rhinoceros).